A 6919-amino-acid chain; its full sequence is Nonribosomal peptide synthetase easA (6919 aa).

Positions 17-93 (TNNEVVEKDI…ELCQSVKLAE (77 aa)) constitute a Carrier 1 domain. An O-(pantetheine 4'-phosphoryl)serine modification is found at Ser54. An epimerization 1 region spans residues 123–427 (EAQKLYASTK…FLRKVKDTRM (305 aa)). Residues 294 to 319 (FRRSTPVESTNDERNTNERQHNRHQN) are disordered. The segment covering 304-319 (NDERNTNERQHNRHQN) has biased composition (basic and acidic residues). The condensation 1 stretch occupies residues 604–981 (LNVELDCGRL…ISTTQEINQL (378 aa)). Residues 1003 to 1394 (QRLRRPDAWA…GRRDTQIKVR (392 aa)) form an adenylation 1 region. Positions 1531–1608 (EPETLLERQV…QLAQTAEVKD (78 aa)) constitute a Carrier 2 domain. An O-(pantetheine 4'-phosphoryl)serine modification is found at Ser1569. The epimerization 2 stretch occupies residues 1617–2031 (LLSPMQKWYF…ANAISALGTE (415 aa)). A condensation 2 region spans residues 2072–2509 (VEDIYPCSPI…VGQLNTVTPK (438 aa)). The segment at 2541 to 2930 (RPNATAVCAW…ARKDSQVKVR (390 aa)) is adenylation 2. The 77-residue stretch at 3067-3143 (APSTFMEKKL…EMAAHLEAQM (77 aa)) folds into the Carrier 3 domain. Ser3104 is subject to O-(pantetheine 4'-phosphoryl)serine. A condensation 3 region spans residues 3188 to 3599 (EDVYPCTPLQ…LLSKDEARRL (412 aa)). Residues 3620–4018 (QHVSTNPYAP…GRRDGQVKIR (399 aa)) are adenylation 3. Residues 4151-4228 (TPSTSEEKNI…QLAKKAVIKT (78 aa)) form the Carrier 4 domain. Ser4188 is modified (O-(pantetheine 4'-phosphoryl)serine). Residues 4282 to 4708 (ESIYYCSPIQ…EIDVIPTGDV (427 aa)) are condensation 4. The tract at residues 4732-5133 (EQALSQPGAQ…GRADGQIKIR (402 aa)) is adenylation 4. In terms of domain architecture, Carrier 5 spans 5260–5337 (ALSTETERRL…DMANTIANSE (78 aa)). Residue Ser5296 is modified to O-(pantetheine 4'-phosphoryl)serine. A condensation 5 region spans residues 5380–5775 (EDAYPCTPLQ…VFGQLQSAAN (396 aa)). Positions 5824 to 6216 (SCPDAQAVHA…IGRRDTQVKI (393 aa)) are adenylation 5. Positions 6344–6421 (EPATVTERLL…DMATLIDRKT (78 aa)) constitute a Carrier 6 domain. Ser6381 is subject to O-(pantetheine 4'-phosphoryl)serine.

It participates in antibiotic biosynthesis. In terms of biological role, nonribosomal peptide synthetase; part of the gene cluster that mediates the biosynthesis of emericellamides, secondary metabolites acting as antibiotics. The biosynthesis of emericellamides initiates from the highly reducing polyketide synthase easB which catalyzes the formation of the linear polyketide chain. EasB produces several polyketides that can be further processed by the downstream enzymes. The polyketides are released from easB as linear polyketide carboxylic acids, which are converted to CoA thioesters by the acyl-CoA ligase easD. The substrates are then loaded onto the acyltransferase easC, which shuttles them to the first thiolation (T) domain of the nonribosomal peptide synthetase easA. EasA then performs condensation of the polyketides with one glycine, two alanine, one valine and one leucine residues. A last step of cyclization leads to the production of emericellamides. The protein is Nonribosomal peptide synthetase easA of Emericella nidulans (strain FGSC A4 / ATCC 38163 / CBS 112.46 / NRRL 194 / M139) (Aspergillus nidulans).